The sequence spans 353 residues: Phosphate acyltransferase (353 aa).

It belongs to the PlsX family. Homodimer. Probably interacts with PlsY.

Its subcellular location is the cytoplasm. The catalysed reaction is a fatty acyl-[ACP] + phosphate = an acyl phosphate + holo-[ACP]. Its pathway is lipid metabolism; phospholipid metabolism. In terms of biological role, catalyzes the reversible formation of acyl-phosphate (acyl-PO(4)) from acyl-[acyl-carrier-protein] (acyl-ACP). This enzyme utilizes acyl-ACP as fatty acyl donor, but not acyl-CoA. The protein is Phosphate acyltransferase of Rhodopseudomonas palustris (strain BisB5).